Here is a 330-residue protein sequence, read N- to C-terminus: Probable WRKY transcription factor 74 (330 aa).

The segment at residues 256-322 (KIADIPPDEY…YEGEHNHSRI (67 aa)) is a DNA-binding region (WRKY).

Its subcellular location is the nucleus. Transcription factor. Interacts specifically with the W box (5'-(T)TGAC[CT]-3'), a frequently occurring elicitor-responsive cis-acting element. In Arabidopsis thaliana (Mouse-ear cress), this protein is Probable WRKY transcription factor 74 (WRKY74).